A 318-amino-acid polypeptide reads, in one-letter code: Small ribosomal subunit protein uS2 (318 aa).

Belongs to the universal ribosomal protein uS2 family.

The chain is Small ribosomal subunit protein uS2 from Mesomycoplasma hyopneumoniae (strain J / ATCC 25934 / NCTC 10110) (Mycoplasma hyopneumoniae).